We begin with the raw amino-acid sequence, 244 residues long: tRNA (guanine-N(1)-)-methyltransferase (244 aa).

Residues glycine 112 and 131–136 (LGDFIL) contribute to the S-adenosyl-L-methionine site. The interval 211–244 (IKRTSDRRPDLLEKWQQEKKPGSREQGSREQGEK) is disordered.

This sequence belongs to the RNA methyltransferase TrmD family. Homodimer.

The protein resides in the cytoplasm. The catalysed reaction is guanosine(37) in tRNA + S-adenosyl-L-methionine = N(1)-methylguanosine(37) in tRNA + S-adenosyl-L-homocysteine + H(+). Specifically methylates guanosine-37 in various tRNAs. This Trichormus variabilis (strain ATCC 29413 / PCC 7937) (Anabaena variabilis) protein is tRNA (guanine-N(1)-)-methyltransferase.